A 558-amino-acid chain; its full sequence is MKDFIEWKDFTFQYDVQSEPTLKGINLSIPKGEKVLILGPSGSGKSTLGHCLNGIIPNTHKGQYSGIFTINHKNAFDLSIYDKSHLVSTVLQDPDGQFIGLTVAEDIAFALENDVVAQEEMASIVEMWAKRLEIAPLLSKRPQDLSGGQKQRVSLAGVLVDDSPILLFDEPLANLDPQSGQDIMALVDRIHQEQDATTIIIEHRLEDVFYERVDRVVLFSDGQIIYNGEPDQLLKTNFLSEYGIREPLYISALKNLGYDFEKQNTMTSIDDFDFSELLIPKMRALDLDKHTDKLLSVQHLSVSYDLENNTLDDVSFDLYKGQRLAIVGKNGAGKSTLAKALCQFIPNNATLIYNNEDVSQDSIKERAERIGYVLQNPNQMISQAMVFDEVALGLRLRGFSDNDIESRVYDILKVCGLYQFRNWPISALSFGQKKRVTIASILILNPEVIILDEPTAGQDMKHYTEMMSFLDKLSCDGHTIVMITHDMQLMLEYTDRAIVIDNGLIVADDHPINILSNTELLKKTHLKKTSLFALADRLGISPQKLTQWYIDNQGGKNG.

2 consecutive ABC transporter domains span residues Ile-5–Glu-246 and Leu-295–Lys-527. ATP contacts are provided by residues Gly-39–Ser-46 and Gly-328–Ser-335.

The protein belongs to the ABC transporter superfamily.

The protein localises to the cell membrane. Probably part of an ABC transporter complex. Responsible for energy coupling to the transport system. The protein is Putative ABC transporter ATP-binding protein SAG1633 of Streptococcus agalactiae serotype V (strain ATCC BAA-611 / 2603 V/R).